Reading from the N-terminus, the 213-residue chain is MPKLMLALDVLDRDRALKIVEDVKDYVDAIKVGYPLVLSTGTEIIKEIKKLCNKEVIADFKVADIPATNEKIAKITLKYADGIIVHGFVGEDSVKAVQDVAKKLNKKVIMVTEMSHPGAVQFLQPIADKLSEMAKKLKVDAIVAPSTRPERLKEIKEIAELPVITPGVGAQGGKIEDILNILDENDYVIVGRAIYQSQNPKEEAKKYKEMLNK.

Substrate-binding positions include aspartate 9, lysine 31, 59–68 (DFKVADIPAT), serine 115, 166–176 (PGVGAQGGKIE), glycine 191, and arginine 192. Catalysis depends on lysine 61, which acts as the Proton donor.

The protein belongs to the OMP decarboxylase family. Type 1 subfamily. Homodimer.

The catalysed reaction is orotidine 5'-phosphate + H(+) = UMP + CO2. It functions in the pathway pyrimidine metabolism; UMP biosynthesis via de novo pathway; UMP from orotate: step 2/2. Its function is as follows. Catalyzes the decarboxylation of orotidine 5'-monophosphate (OMP) to uridine 5'-monophosphate (UMP). In Methanocaldococcus jannaschii (strain ATCC 43067 / DSM 2661 / JAL-1 / JCM 10045 / NBRC 100440) (Methanococcus jannaschii), this protein is Orotidine 5'-phosphate decarboxylase.